Here is a 255-residue protein sequence, read N- to C-terminus: Transcription factor CAULIFLOWER (255 aa).

The region spanning 1 to 61 is the MADS-box domain; sequence MGRGRVELKR…GKLFEYSSES (61 aa). The region spanning 90-180 is the K-box domain; it reads QTNWSMEYSR…TKQIKERENI (91 aa). Residues 90 to 198 are a coiled coil; it reads QTNWSMEYSR…EQLNRSVDDV (109 aa).

Homodimer capable of binding to CArG-box sequences. As to expression, expressed in young flower primordia.

Its subcellular location is the nucleus. Probable transcription factor that promotes early floral meristem identity in synergy with APETALA1, FRUITFULL and LEAFY. Is required subsequently for the transition of an inflorescence meristem into a floral meristem. Seems to be partially redundant to the function of APETALA1. Positively regulates the APETALA1 and LEAFY expression. This is Transcription factor CAULIFLOWER (CAL) from Arabidopsis thaliana (Mouse-ear cress).